Here is a 133-residue protein sequence, read N- to C-terminus: Small ribosomal subunit protein uS12c (133 aa).

The protein belongs to the universal ribosomal protein uS12 family. Part of the 30S ribosomal subunit.

It is found in the plastid. The protein localises to the chloroplast. Its function is as follows. With S4 and S5 plays an important role in translational accuracy. Located at the interface of the 30S and 50S subunits. This Chlamydomonas reinhardtii (Chlamydomonas smithii) protein is Small ribosomal subunit protein uS12c (rps12).